The chain runs to 443 residues: Tubulin epsilon and delta complex protein 2 (443 aa).

Residues 8-33 (RRLVAELRDALDSCAERQRQLEQSLR) are a coiled coil. Disordered stretches follow at residues 45–72 (AETPAPEPTPGSEINKEAPSSACPPSPQ) and 93–146 (GLSK…PWVP). Low complexity predominate over residues 106 to 124 (LKSGSASTATKASAPPSTS).

As to quaternary structure, interacts with TEDC1. Found in a complex with TEDC1, TEDC2, TUBE1 and TUBD1.

The protein localises to the cell projection. Its subcellular location is the cilium. It is found in the cytoplasm. It localises to the cytoskeleton. The protein resides in the microtubule organizing center. The protein localises to the centrosome. Its subcellular location is the centriole. In terms of biological role, acts as a positive regulator of ciliary hedgehog signaling. Required for centriole stability. The chain is Tubulin epsilon and delta complex protein 2 from Bos taurus (Bovine).